A 724-amino-acid chain; its full sequence is MVRYMVTAALPYANGPIHAGHLAGAYLPADIFVRYLRLKGEDVVFICGTDEHGTPISFRALNEKRSPREIVDEFHEHIKTAFQRVKISFDYFGRTELPVHYRLSQEFFLKALENGYLVKKVTKQAYCEHDKRFLPDRFVIGTCPYCGAENQRGDQCEVCGRPLTPEILIEPRCAFCKNPITFRESTHYYIKMQEFEEKLKEWIKEKDWKPNVKNMVLGWIEEGLEERAITRDLDWGIPVPLDEEDMKNKVLYVWFEAPIGYISLTIEYFKRIGKPNEWKKYWLNLDGQTRVIHFIGKDNIPFHAIFWPAFLMAYGKYKDEEVEAEWNLPYDIPANEYLTLEGKKFSTSRNWAIWIHEFLDVFPADYLRYYLTSIMPETRDSDFSFAEFKTKINEELVNVLGNFVYRALTFVNRYFDGIVPERGELDELDRQALEEIEKTFEEVGKLIREYRFKDALKKVMNLAGFGNRYFDYKEPWKTIKEDKTRTGTTINISLQIVKALGILLEPFLPDASEKIWHFLNLEEVKTWRFTELPAGHKVRKPEILFKKASDDQIIYFILNYMGRNNPDAARELLEKYYKLEDVEKVAIEKFGEEDGRFMLKKIFKEKYKGEKKGEQKMQYVSFEEFSKIDLRIGKIVEVQDHPNADKLYVVKVDLGGEIRTLVAGLKKYYKPEELLNRYVVIVANLEPKKLRGVESQGMLLAADDGEKVALLMPDKEVKLGAKVR.

The 'HIGH' region signature appears at 11-21 (PYANGPIHAGH). The Zn(2+) site is built by Cys-143, Cys-146, Cys-156, and Cys-159. A 'KMSKS' region motif is present at residues 344–348 (KFSTS). Thr-347 contributes to the ATP binding site. Residues 624-724 (EFSKIDLRIG…KEVKLGAKVR (101 aa)) enclose the tRNA-binding domain.

This sequence belongs to the class-I aminoacyl-tRNA synthetase family. MetG type 1 subfamily. As to quaternary structure, homodimer. Zn(2+) is required as a cofactor.

It localises to the cytoplasm. It catalyses the reaction tRNA(Met) + L-methionine + ATP = L-methionyl-tRNA(Met) + AMP + diphosphate. Functionally, is required not only for elongation of protein synthesis but also for the initiation of all mRNA translation through initiator tRNA(fMet) aminoacylation. The sequence is that of Methionine--tRNA ligase from Pyrococcus furiosus (strain ATCC 43587 / DSM 3638 / JCM 8422 / Vc1).